The primary structure comprises 368 residues: Biotin synthase (368 aa).

The 236-residue stretch at 74–309 folds into the Radical SAM core domain; sequence CCGNVVDLCS…QQILRYAGGR (236 aa). 3 residues coordinate [4Fe-4S] cluster: cysteine 92, cysteine 96, and cysteine 99. Positions 137, 174, 234, and 304 each coordinate [2Fe-2S] cluster.

Belongs to the radical SAM superfamily. Biotin synthase family. In terms of assembly, homodimer. [4Fe-4S] cluster serves as cofactor. It depends on [2Fe-2S] cluster as a cofactor.

It carries out the reaction (4R,5S)-dethiobiotin + (sulfur carrier)-SH + 2 reduced [2Fe-2S]-[ferredoxin] + 2 S-adenosyl-L-methionine = (sulfur carrier)-H + biotin + 2 5'-deoxyadenosine + 2 L-methionine + 2 oxidized [2Fe-2S]-[ferredoxin]. Its pathway is cofactor biosynthesis; biotin biosynthesis; biotin from 7,8-diaminononanoate: step 2/2. Catalyzes the conversion of dethiobiotin (DTB) to biotin by the insertion of a sulfur atom into dethiobiotin via a radical-based mechanism. The chain is Biotin synthase from Rippkaea orientalis (strain PCC 8801 / RF-1) (Cyanothece sp. (strain PCC 8801)).